A 623-amino-acid chain; its full sequence is Bifunctional enzyme CysN/CysC (623 aa).

Residues 1–450 (MQSVIAYLKQ…HVARARIKGQ (450 aa)) form a sulfate adenylyltransferase region. A tr-type G domain is found at 14–228 (KPLLRFITCG…YLEALEPADV (215 aa)). Positions 23-30 (GSVDDGKS) are G1. 23-30 (GSVDDGKS) provides a ligand contact to GTP. Residues 81–85 (GITID) form a G2 region. Positions 102-105 (DCPG) are G3. Residues 102 to 106 (DCPGH) and 157 to 160 (NKMD) contribute to the GTP site. The interval 157–160 (NKMD) is G4. A G5 region spans residues 194–196 (SAL). The segment at 451–623 (TPKVLWFTGL…VLSLLGVEGK (173 aa)) is adenylyl-sulfate kinase. 459 to 466 (GLSGAGKS) is an ATP binding site. Ser533 (phosphoserine intermediate) is an active-site residue.

In the C-terminal section; belongs to the APS kinase family. It in the N-terminal section; belongs to the TRAFAC class translation factor GTPase superfamily. Classic translation factor GTPase family. CysN/NodQ subfamily. Heterodimer composed of CysD, the smaller subunit, and CysNC.

It catalyses the reaction sulfate + ATP + H(+) = adenosine 5'-phosphosulfate + diphosphate. The enzyme catalyses adenosine 5'-phosphosulfate + ATP = 3'-phosphoadenylyl sulfate + ADP + H(+). Its pathway is sulfur metabolism; hydrogen sulfide biosynthesis; sulfite from sulfate: step 1/3. It participates in sulfur metabolism; hydrogen sulfide biosynthesis; sulfite from sulfate: step 2/3. In terms of biological role, with CysD forms the ATP sulfurylase (ATPS) that catalyzes the adenylation of sulfate producing adenosine 5'-phosphosulfate (APS) and diphosphate, the first enzymatic step in sulfur assimilation pathway. APS synthesis involves the formation of a high-energy phosphoric-sulfuric acid anhydride bond driven by GTP hydrolysis by CysN coupled to ATP hydrolysis by CysD. Its function is as follows. APS kinase catalyzes the synthesis of activated sulfate. The chain is Bifunctional enzyme CysN/CysC (cysNC) from Xylella fastidiosa (strain Temecula1 / ATCC 700964).